We begin with the raw amino-acid sequence, 55 residues long: Large ribosomal subunit protein bL33 (55 aa).

This sequence belongs to the bacterial ribosomal protein bL33 family. Part of the 50S ribosomal subunit. Contacts protein L35.

Binds the 23S rRNA and the E site tRNA. The protein is Large ribosomal subunit protein bL33 (rpmG) of Deinococcus radiodurans (strain ATCC 13939 / DSM 20539 / JCM 16871 / CCUG 27074 / LMG 4051 / NBRC 15346 / NCIMB 9279 / VKM B-1422 / R1).